We begin with the raw amino-acid sequence, 266 residues long: MKGILGRKVGMTQIFSDNGIVIPVTLIEVKPNIVSNVLTDEKNGYKAIQLSLEDKKKSRQRKPEIGHFAKANTTPKRFVKEIRDMQGFELGSNVDVSIFTPGEFVDVTGISKGKGFAGTIKRHNQKIGPKSHGGGGGSKPVRQTGSLGDISGNKVVKGMTMPGHLGHEQVTIQNLEVIMTDVKNNILLVKGAVPGPKKGFVVIKECAKKIPSKEAVKLVDLEIVAKKNHLFEISKKYNINLKNDMSIEEMESLIEKAKEEQEGKGE.

Residues 124–149 are disordered; that stretch reads NQKIGPKSHGGGGGSKPVRQTGSLGD.

The protein belongs to the universal ribosomal protein uL3 family. As to quaternary structure, part of the 50S ribosomal subunit. Forms a cluster with proteins L14 and L19.

Functionally, one of the primary rRNA binding proteins, it binds directly near the 3'-end of the 23S rRNA, where it nucleates assembly of the 50S subunit. The sequence is that of Large ribosomal subunit protein uL3 from Mycoplasmopsis pulmonis (strain UAB CTIP) (Mycoplasma pulmonis).